Here is a 103-residue protein sequence, read N- to C-terminus: Large ribosomal subunit protein bL28 (103 aa).

This sequence belongs to the bacterial ribosomal protein bL28 family.

The chain is Large ribosomal subunit protein bL28 from Anaplasma marginale (strain St. Maries).